The chain runs to 276 residues: Orotidine 5'-phosphate decarboxylase (276 aa).

Lys-96 acts as the Proton donor in catalysis.

The protein belongs to the OMP decarboxylase family. Type 2 subfamily.

The catalysed reaction is orotidine 5'-phosphate + H(+) = UMP + CO2. It functions in the pathway pyrimidine metabolism; UMP biosynthesis via de novo pathway; UMP from orotate: step 2/2. The sequence is that of Orotidine 5'-phosphate decarboxylase from Porphyromonas gingivalis (strain ATCC 33277 / DSM 20709 / CIP 103683 / JCM 12257 / NCTC 11834 / 2561).